Here is a 144-residue protein sequence, read N- to C-terminus: MKLDQIDLNIIEELKKDSRLSMRELGRKIKLSPPSVTERVRQLESFGIIKQYTLEVDQKKLGLPVSCIVEATVKNADYERFKSYIQTLPNIEFCYRIAGAACYMLKINAESLEAVEDFINKTSPYAQTVTHVIFSEIDTKNGRG.

The region spanning L3–P64 is the HTH asnC-type domain. The segment at residues M22–R41 is a DNA-binding region (H-T-H motif).

Transcriptional regulator with a possible role in regulation of amino acid metabolism. Plays a role in the growth phase transition. This is HTH-type transcriptional regulator LrpC (lrpC) from Bacillus subtilis (strain 168).